The chain runs to 317 residues: Serpentine receptor class delta-44 (317 aa).

6 consecutive transmembrane segments (helical) span residues 5 to 25, 90 to 110, 130 to 150, 185 to 205, 235 to 255, and 264 to 284; these read ILSV…IILI, MFHI…LTTF, ILFI…LVII, RVNG…CLLL, IFGH…SLIT, and FFIF…TMYF.

Belongs to the nematode receptor-like protein srd family.

The protein localises to the membrane. In Caenorhabditis elegans, this protein is Serpentine receptor class delta-44 (srd-44).